The chain runs to 335 residues: Nucleoid-associated protein YejK (335 aa).

It belongs to the YejK family.

The protein localises to the cytoplasm. Its subcellular location is the nucleoid. This chain is Nucleoid-associated protein YejK, found in Shigella dysenteriae serotype 1 (strain Sd197).